The primary structure comprises 80 residues: Conotoxin Ca11.3 (80 aa).

The signal sequence occupies residues 1–19 (MKLVLAIVVILMLLSLSTG). The propeptide occupies 20 to 42 (AEMSDNHASRSATALRDRLLSPK). 4 cysteine pairs are disulfide-bonded: cysteine 46/cysteine 60, cysteine 53/cysteine 65, cysteine 59/cysteine 72, and cysteine 64/cysteine 79.

It belongs to the conotoxin I3 superfamily. In terms of tissue distribution, expressed by the venom duct.

It localises to the secreted. This Conus caracteristicus (Characteristic cone) protein is Conotoxin Ca11.3.